The sequence spans 440 residues: Chromosome partition protein MukF (440 aa).

Residues 208–236 are leucine-zipper; the sequence is LSETSGTLRELQDTLEAAGDKLQANLLRI.

This sequence belongs to the MukF family. In terms of assembly, interacts, and probably forms a ternary complex, with MukE and MukB via its C-terminal region. The complex formation is stimulated by calcium or magnesium. It is required for an interaction between MukE and MukB.

Its subcellular location is the cytoplasm. The protein localises to the nucleoid. In terms of biological role, involved in chromosome condensation, segregation and cell cycle progression. May participate in facilitating chromosome segregation by condensation DNA from both sides of a centrally located replisome during cell division. Not required for mini-F plasmid partitioning. Probably acts via its interaction with MukB and MukE. Overexpression results in anucleate cells. It has a calcium binding activity. This is Chromosome partition protein MukF from Escherichia coli O9:H4 (strain HS).